A 155-amino-acid polypeptide reads, in one-letter code: E3 ubiquitin-protein ligase RHA2A (155 aa).

The segment at 86 to 128 adopts an RING-type; atypical zinc-finger fold; sequence CVVCLSKLKEGEEVRKLECRHVFHKKCLEGWLHQFNFTCPLCR.

Interacts with NAC019 and NAC055. In terms of tissue distribution, expressed in stems, flowers, cauline leaves, rosettes, siliques, seeds and roots.

It is found in the cytoplasm. It localises to the nucleus. The catalysed reaction is S-ubiquitinyl-[E2 ubiquitin-conjugating enzyme]-L-cysteine + [acceptor protein]-L-lysine = [E2 ubiquitin-conjugating enzyme]-L-cysteine + N(6)-ubiquitinyl-[acceptor protein]-L-lysine.. Its pathway is protein modification; protein ubiquitination. In terms of biological role, E3 ubiquitin-protein ligase involved in the positive regulation of abscisic acid (ABA) signaling and responses to salt and osmotic stresses during seed germination and early seedling development. Acts additively with RHA2B in regulating ABA signaling and drought response. Possesses E3 ubiquitin ligase activity in vitro. This chain is E3 ubiquitin-protein ligase RHA2A, found in Arabidopsis thaliana (Mouse-ear cress).